The sequence spans 633 residues: uncharacterized protein (633 aa).

This is an uncharacterized protein from Acanthamoeba polyphaga mimivirus (APMV).